A 281-amino-acid polypeptide reads, in one-letter code: Biotin synthase (281 aa).

A Radical SAM core domain is found at methionine 1–arginine 230. Positions 18, 22, and 25 each coordinate [4Fe-4S] cluster. Residues cysteine 62, cysteine 97, and arginine 223 each coordinate [2Fe-2S] cluster.

This sequence belongs to the radical SAM superfamily. Biotin synthase family. In terms of assembly, homodimer. [4Fe-4S] cluster is required as a cofactor. It depends on [2Fe-2S] cluster as a cofactor.

It catalyses the reaction (4R,5S)-dethiobiotin + (sulfur carrier)-SH + 2 reduced [2Fe-2S]-[ferredoxin] + 2 S-adenosyl-L-methionine = (sulfur carrier)-H + biotin + 2 5'-deoxyadenosine + 2 L-methionine + 2 oxidized [2Fe-2S]-[ferredoxin]. It functions in the pathway cofactor biosynthesis; biotin biosynthesis; biotin from 7,8-diaminononanoate: step 2/2. In terms of biological role, catalyzes the conversion of dethiobiotin (DTB) to biotin by the insertion of a sulfur atom into dethiobiotin via a radical-based mechanism. In Sulfurimonas denitrificans (strain ATCC 33889 / DSM 1251) (Thiomicrospira denitrificans (strain ATCC 33889 / DSM 1251)), this protein is Biotin synthase.